The primary structure comprises 68 residues: IDIKRIIEHLPRQRLGVLITDHNVRETLAVCERAYIVSQGHLIAHGTPQQILEDEQVKRVYLGEDFRL.

Belongs to the ABC transporter superfamily. Outer membrane lipopolysaccharide export (TC 1.B.42) family. As to quaternary structure, component of the lipopolysaccharide transport and assembly complex. The LptBFG transporter is composed of two ATP-binding proteins (LptB) and two transmembrane proteins (LptF and LptG).

It localises to the cytoplasm. The protein localises to the cell inner membrane. In terms of biological role, part of the ABC transporter complex LptBFG involved in the translocation of lipopolysaccharide (LPS) from the inner membrane to the outer membrane. Probably responsible for energy coupling to the transport system. This is Lipopolysaccharide export system ATP-binding protein LptB (lptB) from Klebsiella oxytoca.